A 282-amino-acid chain; its full sequence is Pantothenate synthetase (282 aa).

Position 30–37 (30–37 (MGYLHEGH)) interacts with ATP. H37 acts as the Proton donor in catalysis. Q61 serves as a coordination point for (R)-pantoate. Q61 serves as a coordination point for beta-alanine. Residue 147-150 (GQKD) coordinates ATP. A (R)-pantoate-binding site is contributed by Q153. ATP is bound by residues V176 and 184–187 (MSSR).

The protein belongs to the pantothenate synthetase family. Homodimer.

It is found in the cytoplasm. It catalyses the reaction (R)-pantoate + beta-alanine + ATP = (R)-pantothenate + AMP + diphosphate + H(+). It functions in the pathway cofactor biosynthesis; (R)-pantothenate biosynthesis; (R)-pantothenate from (R)-pantoate and beta-alanine: step 1/1. Its function is as follows. Catalyzes the condensation of pantoate with beta-alanine in an ATP-dependent reaction via a pantoyl-adenylate intermediate. This chain is Pantothenate synthetase, found in Pelotomaculum thermopropionicum (strain DSM 13744 / JCM 10971 / SI).